Here is a 476-residue protein sequence, read N- to C-terminus: Stromelysin-2 (476 aa).

The N-terminal stretch at 1–17 is a signal peptide; sequence MEPLAILVLLCFPICSA. Positions 18–99 are cleaved as a propeptide — activation peptide; that stretch reads YPLHGAVRQD…PRCGVPDVGG (82 aa). Residues 90–97 carry the Cysteine switch motif; that stretch reads PRCGVPDV. Zn(2+)-binding residues include Cys92, His168, Asp170, His183, His196, and His218. Residue Glu219 is part of the active site. Residues His222 and His228 each contribute to the Zn(2+) site. 4 Hemopexin repeats span residues 286 to 335, 336 to 382, 384 to 432, and 433 to 476; these read PVKC…WPSL, PSGL…GFPP, VKKI…FPGI, and EPQV…WLLC. Cys289 and Cys476 are joined by a disulfide.

Belongs to the peptidase M10A family. Requires Zn(2+) as cofactor. It depends on Ca(2+) as a cofactor.

The protein resides in the secreted. The protein localises to the extracellular space. It is found in the extracellular matrix. The catalysed reaction is Similar to stromelysin 1, but action on collagen types III, IV and V is weak.. In terms of biological role, can degrade fibronectin, gelatins of type I, III, IV, and V; weakly collagens III, IV, and V. Activates procollagenase. The chain is Stromelysin-2 (Mmp10) from Rattus norvegicus (Rat).